The primary structure comprises 187 residues: dCTP deaminase (187 aa).

DCTP is bound by residues lysine 110 to arginine 115, threonine 134 to glutamate 136, glutamine 155, tyrosine 169, and glutamine 179. Residue glutamate 136 is the Proton donor/acceptor of the active site.

It belongs to the dCTP deaminase family. As to quaternary structure, homotrimer.

The catalysed reaction is dCTP + H2O + H(+) = dUTP + NH4(+). It participates in pyrimidine metabolism; dUMP biosynthesis; dUMP from dCTP (dUTP route): step 1/2. Functionally, catalyzes the deamination of dCTP to dUTP. The protein is dCTP deaminase of Bordetella pertussis (strain Tohama I / ATCC BAA-589 / NCTC 13251).